Consider the following 380-residue polypeptide: Protein GOLM2 (380 aa).

The residue at position 1 (M1) is an N-acetylmethionine. Over 1 to 14 (MVGFGANRRAGRLP) the chain is Cytoplasmic. A helical; Signal-anchor for type II membrane protein transmembrane segment spans residues 15-35 (SLVLAVLLVVIAVLAFNYWSI). The stretch at 35–195 (ISSRHVLLQE…QFLQEQKQEA (161 aa)) forms a coiled coil. Over 36–380 (SSRHVLLQEE…YGKQRFNDAL (345 aa)) the chain is Lumenal. Composition is skewed to basic and acidic residues over residues 192 to 212 (KQEA…DNHA) and 227 to 247 (KNEE…KRGG). The segment at 192-254 (KQEAHKFESK…RGGDAGMPGI (63 aa)) is disordered. Phosphoserine occurs at positions 233 and 275. A disordered region spans residues 280-380 (ESHQVISHLP…YGKQRFNDAL (101 aa)). Over residues 305–321 (NHNGNSRTSKQNPSNPL) the composition is skewed to polar residues. Over residues 344–380 (ATKDRAGDFHKLKQNDEERELQMDPADYGKQRFNDAL) the composition is skewed to basic and acidic residues.

It belongs to the GOLM family.

It is found in the membrane. This chain is Protein GOLM2 (GOLM2), found in Bos taurus (Bovine).